The primary structure comprises 375 residues: Dual-specificity RNA methyltransferase RlmN (375 aa).

E98 functions as the Proton acceptor in the catalytic mechanism. The Radical SAM core domain occupies 106–346 (GGKRRTLCVS…VRTTRGDDID (241 aa)). A disulfide bridge links C113 with C349. Residues C120, C124, and C127 each coordinate [4Fe-4S] cluster. Residues 174-175 (GE), S206, 228-230 (SLH), and N306 each bind S-adenosyl-L-methionine. C349 (S-methylcysteine intermediate) is an active-site residue.

The protein belongs to the radical SAM superfamily. RlmN family. [4Fe-4S] cluster is required as a cofactor.

The protein localises to the cytoplasm. It carries out the reaction adenosine(2503) in 23S rRNA + 2 reduced [2Fe-2S]-[ferredoxin] + 2 S-adenosyl-L-methionine = 2-methyladenosine(2503) in 23S rRNA + 5'-deoxyadenosine + L-methionine + 2 oxidized [2Fe-2S]-[ferredoxin] + S-adenosyl-L-homocysteine. The enzyme catalyses adenosine(37) in tRNA + 2 reduced [2Fe-2S]-[ferredoxin] + 2 S-adenosyl-L-methionine = 2-methyladenosine(37) in tRNA + 5'-deoxyadenosine + L-methionine + 2 oxidized [2Fe-2S]-[ferredoxin] + S-adenosyl-L-homocysteine. Functionally, specifically methylates position 2 of adenine 2503 in 23S rRNA and position 2 of adenine 37 in tRNAs. m2A2503 modification seems to play a crucial role in the proofreading step occurring at the peptidyl transferase center and thus would serve to optimize ribosomal fidelity. This Chromohalobacter salexigens (strain ATCC BAA-138 / DSM 3043 / CIP 106854 / NCIMB 13768 / 1H11) protein is Dual-specificity RNA methyltransferase RlmN.